We begin with the raw amino-acid sequence, 354 residues long: Carbonic anhydrase 12 (354 aa).

Positions 1 to 24 (MPRRSLHAAAVLLLVILKEQPSSP) are cleaved as a signal peptide. The Extracellular portion of the chain corresponds to 25 to 301 (APVNGSKWTY…VQVCTAAGLS (277 aa)). Asparagine 28 and asparagine 80 each carry an N-linked (GlcNAc...) asparagine glycan. The Alpha-carbonic anhydrase domain maps to 30–289 (SKWTYFGPDG…FDERLVYTSF (260 aa)). Cysteine 50 and cysteine 230 are joined by a disulfide. Histidine 94 serves as the catalytic Proton donor/acceptor. Residues histidine 119, histidine 121, and histidine 145 each contribute to the Zn(2+) site. Asparagine 162 carries an N-linked (GlcNAc...) asparagine glycan. Substrate is bound at residue 226–227 (TT). The chain crosses the membrane as a helical span at residues 302–322 (LGIILSLALAGILGICIVVVV). The Cytoplasmic segment spans residues 323 to 354 (SIWLFRRKSIKKGDNKGVIYKPATKMETEAHA).

It belongs to the alpha-carbonic anhydrase family. In terms of assembly, homodimer. Zn(2+) is required as a cofactor. In terms of tissue distribution, highly expressed in colon, kidney, prostate, intestine and activated lymphocytes. Expressed at much higher levels in the renal cell cancers than in surrounding normal kidney tissue. Moderately expressed in pancreas, ovary and testis. Expressed in sweat glands and bronchiolar epithelium.

It localises to the membrane. The protein localises to the cell membrane. It carries out the reaction hydrogencarbonate + H(+) = CO2 + H2O. Its activity is regulated as follows. Inhibited by coumarins, saccharin, sulfonamide derivatives such as acetazolamide (AZA), benzenesulfonamide and derivatives (4-carboxyethylbenzene-sulfonamide, 4-carboxyethylbenzene-sulfonamide ethyl ester, 4-(acetyl-2-aminoethyl)benzene-sulfonamide, 4-aminoethylbenzene-sulfonamide) and Foscarnet (phosphonoformate trisodium salt). Functionally, reversible hydration of carbon dioxide. This chain is Carbonic anhydrase 12, found in Homo sapiens (Human).